The sequence spans 210 residues: Probable GTP-binding protein EngB (210 aa).

An EngB-type G domain is found at 30–204 (QGYEVAFAGR…YRVLADWMEL (175 aa)). GTP contacts are provided by residues 38 to 45 (GRSNAGKS), 64 to 68 (GRTQL), 82 to 85 (DLPG), 149 to 152 (TKAD), and 182 to 185 (LFSA). Mg(2+)-binding residues include S45 and T66.

This sequence belongs to the TRAFAC class TrmE-Era-EngA-EngB-Septin-like GTPase superfamily. EngB GTPase family. The cofactor is Mg(2+).

In terms of biological role, necessary for normal cell division and for the maintenance of normal septation. The chain is Probable GTP-binding protein EngB from Pseudomonas entomophila (strain L48).